Here is a 458-residue protein sequence, read N- to C-terminus: Cysteine protease ATG4C (458 aa).

Met1 is subject to N-acetylmethionine. Cys111 acts as the Nucleophile in catalysis. Residues Asp345 and His347 contribute to the active site. Ser451 bears the Phosphoserine mark. Thr452 carries the phosphothreonine modification.

Belongs to the peptidase C54 family.

The protein localises to the cytoplasm. The catalysed reaction is [protein]-C-terminal L-amino acid-glycyl-phosphatidylethanolamide + H2O = [protein]-C-terminal L-amino acid-glycine + a 1,2-diacyl-sn-glycero-3-phosphoethanolamine. Inhibited by N-ethylmaleimide. Its function is as follows. Cysteine protease that plays a key role in autophagy by mediating both proteolytic activation and delipidation of ATG8 family proteins. The protease activity is required for proteolytic activation of ATG8 family proteins: cleaves the C-terminal amino acid of ATG8 proteins MAP1LC3 and GABARAPL2, to reveal a C-terminal glycine. Exposure of the glycine at the C-terminus is essential for ATG8 proteins conjugation to phosphatidylethanolamine (PE) and insertion to membranes, which is necessary for autophagy. In addition to the protease activity, also mediates delipidation of ATG8 family proteins. Catalyzes delipidation of PE-conjugated forms of ATG8 proteins during macroautophagy. Compared to ATG4B, the major protein for proteolytic activation of ATG8 proteins, shows weaker ability to cleave the C-terminal amino acid of ATG8 proteins, while it displays stronger delipidation activity. In contrast to other members of the family, weakly or not involved in phagophore growth during mitophagy. This Mus musculus (Mouse) protein is Cysteine protease ATG4C.